The sequence spans 507 residues: Maturase K (507 aa).

The protein belongs to the intron maturase 2 family. MatK subfamily.

The protein localises to the plastid. The protein resides in the chloroplast. In terms of biological role, usually encoded in the trnK tRNA gene intron. Probably assists in splicing its own and other chloroplast group II introns. The sequence is that of Maturase K from Euryale ferox (Gorgon plant).